The sequence spans 280 residues: 2-dehydro-3-deoxyphosphooctonate aldolase (280 aa).

The protein belongs to the KdsA family.

The protein localises to the cytoplasm. The enzyme catalyses D-arabinose 5-phosphate + phosphoenolpyruvate + H2O = 3-deoxy-alpha-D-manno-2-octulosonate-8-phosphate + phosphate. Its pathway is carbohydrate biosynthesis; 3-deoxy-D-manno-octulosonate biosynthesis; 3-deoxy-D-manno-octulosonate from D-ribulose 5-phosphate: step 2/3. It participates in bacterial outer membrane biogenesis; lipopolysaccharide biosynthesis. This is 2-dehydro-3-deoxyphosphooctonate aldolase from Rhizobium meliloti (strain 1021) (Ensifer meliloti).